Consider the following 272-residue polypeptide: Tryptophan synthase alpha chain (272 aa).

Residues glutamate 49 and aspartate 60 each act as proton acceptor in the active site.

Belongs to the TrpA family. Tetramer of two alpha and two beta chains.

It catalyses the reaction (1S,2R)-1-C-(indol-3-yl)glycerol 3-phosphate + L-serine = D-glyceraldehyde 3-phosphate + L-tryptophan + H2O. Its pathway is amino-acid biosynthesis; L-tryptophan biosynthesis; L-tryptophan from chorismate: step 5/5. Its function is as follows. The alpha subunit is responsible for the aldol cleavage of indoleglycerol phosphate to indole and glyceraldehyde 3-phosphate. The polypeptide is Tryptophan synthase alpha chain (Polaromonas sp. (strain JS666 / ATCC BAA-500)).